An 89-amino-acid chain; its full sequence is MYTLELLLKGNPAPIVVHQKEEEAANRAYQSIVNALQSGSPQSLELTCDRTGKKVFLLTGELCGVQMTSKSGSASPMGTRPGFLAQLQS.

The segment at S69–S89 is disordered.

Belongs to the UPF0367 family.

This is UPF0367 protein CYB_2632 from Synechococcus sp. (strain JA-2-3B'a(2-13)) (Cyanobacteria bacterium Yellowstone B-Prime).